An 83-amino-acid polypeptide reads, in one-letter code: Cardiotoxin 7a (83 aa).

The first 21 residues, 1–21, serve as a signal peptide directing secretion; that stretch reads MKTLLLTLVVVTIVCLDLGYT. Cystine bridges form between Cys-24–Cys-43, Cys-36–Cys-61, Cys-65–Cys-76, and Cys-77–Cys-82.

It belongs to the three-finger toxin family. Short-chain subfamily. Orphan group XV sub-subfamily. In terms of tissue distribution, expressed by the venom gland.

It is found in the secreted. It localises to the target cell membrane. Functionally, has low cytotoxic activity. The polypeptide is Cardiotoxin 7a (Naja atra (Chinese cobra)).